Consider the following 155-residue polypeptide: Small ribosomal subunit protein uS7c (155 aa).

Belongs to the universal ribosomal protein uS7 family. As to quaternary structure, part of the 30S ribosomal subunit.

It is found in the plastid. It localises to the chloroplast. In terms of biological role, one of the primary rRNA binding proteins, it binds directly to 16S rRNA where it nucleates assembly of the head domain of the 30S subunit. The sequence is that of Small ribosomal subunit protein uS7c (rps7) from Lactoris fernandeziana.